Here is a 352-residue protein sequence, read N- to C-terminus: Uroporphyrinogen decarboxylase (352 aa).

Residues 29 to 33 (RQAGR), Phe-48, Asp-78, Tyr-154, Ser-209, and His-322 each bind substrate.

The protein belongs to the uroporphyrinogen decarboxylase family. Homodimer.

Its subcellular location is the cytoplasm. It carries out the reaction uroporphyrinogen III + 4 H(+) = coproporphyrinogen III + 4 CO2. The protein operates within porphyrin-containing compound metabolism; protoporphyrin-IX biosynthesis; coproporphyrinogen-III from 5-aminolevulinate: step 4/4. Functionally, catalyzes the decarboxylation of four acetate groups of uroporphyrinogen-III to yield coproporphyrinogen-III. In Bacillus pumilus (strain SAFR-032), this protein is Uroporphyrinogen decarboxylase.